Consider the following 485-residue polypeptide: Glucagon receptor (485 aa).

Residues 1 to 26 (MLLTQLHCPYLLLLLVVLSCLPKAPS) form the signal peptide. At 27–137 (AQVMDFLFEK…EIEVQKGVAK (111 aa)) the chain is on the extracellular side. 3 cysteine pairs are disulfide-bonded: cysteine 44-cysteine 68, cysteine 59-cysteine 101, and cysteine 82-cysteine 122. N-linked (GlcNAc...) asparagine glycosylation is found at asparagine 47, asparagine 60, asparagine 75, and asparagine 79. Residues 138-162 (MYSSYQVMYTVGYSLSLGALLLALV) form a helical membrane-spanning segment. At 163 to 174 (ILLGLRKLHCTR) the chain is on the cytoplasmic side. Residues 175 to 199 (NYIHGNLFASFVLKAGSVLVIDWLL) traverse the membrane as a helical segment. The Extracellular portion of the chain corresponds to 200–226 (KTRYSQKIGDDLSVSVWLSDGAVAGCR). Cysteine 225 and cysteine 295 are joined by a disulfide. The chain crosses the membrane as a helical span at residues 227 to 250 (VATVIMQYGIIANYCWLLVEGVYL). Residues 251–264 (YSLLSITTFSEKSF) are Cytoplasmic-facing. The chain crosses the membrane as a helical span at residues 265-286 (FSLYLCIGWGSPLLFVIPWVVV). Residues 287 to 304 (KCLFENVQCWTSNDNMGF) lie on the Extracellular side of the membrane. Residues 305–327 (WWILRIPVLLAILINFFIFVRII) form a helical membrane-spanning segment. At 328-351 (HLLVAKLRAHQMHYADYKFRLARS) the chain is on the cytoplasmic side. Positions 351–354 (STLT) are important for allosteric inhibitor binding. A helical membrane pass occupies residues 352–370 (TLTLIPLLGVHEVVFAFVT). At 371-382 (DEHAQGTLRSTK) the chain is on the extracellular side. Residues 383 to 403 (LFFDLFFSSFQGLLVAVLYCF) form a helical membrane-spanning segment. The Cytoplasmic segment spans residues 404–485 (LNKEVQAELL…SLPRLADSPT (82 aa)). The disordered stretch occupies residues 455-485 (MSAGSSSGTGCEPSAKTSLASSLPRLADSPT). The segment covering 456-475 (SAGSSSGTGCEPSAKTSLAS) has biased composition (polar residues). A phosphoserine mark is found at serine 460 and serine 476.

This sequence belongs to the G-protein coupled receptor 2 family. Ligand-binding promotes phosphorylation of serine residues in the C-terminal cytoplasmic domain. Phosphorylation is important for receptor endocytosis after ligand-binding.

The protein resides in the cell membrane. Its function is as follows. G-protein coupled receptor for glucagon that plays a central role in the regulation of blood glucose levels and glucose homeostasis. Regulates the rate of hepatic glucose production by promoting glycogen hydrolysis and gluconeogenesis. Plays an important role in mediating the responses to fasting. Ligand binding causes a conformation change that triggers signaling via guanine nucleotide-binding proteins (G proteins) and modulates the activity of down-stream effectors, such as adenylate cyclase. Promotes activation of adenylate cyclase. Besides, plays a role in signaling via a phosphatidylinositol-calcium second messenger system. The sequence is that of Glucagon receptor (Gcgr) from Rattus norvegicus (Rat).